The following is an 81-amino-acid chain: Short neurotoxin SN160 (81 aa).

The N-terminal stretch at 1–21 (MKTLLLTLVVVTIVCLDLGYT) is a signal peptide. Cystine bridges form between C24–C43, C38–C60, C62–C73, and C74–C79.

Belongs to the three-finger toxin family. Short-chain subfamily. Type I alpha-neurotoxin sub-subfamily. As to expression, expressed by the venom gland.

It localises to the secreted. In terms of biological role, binds to muscle nicotinic acetylcholine receptor (nAChR) and inhibit acetylcholine from binding to the receptor, thereby impairing neuromuscular transmission. The sequence is that of Short neurotoxin SN160 from Hydrophis hardwickii (Hardwick's spine-bellied seasnake).